The sequence spans 557 residues: D-arabinono-1,4-lactone oxidase (557 aa).

The region spanning 25 to 209 (FLCKPQAIFQ…THVTLRTCPK (185 aa)) is the FAD-binding PCMH-type domain. FAD is bound by residues 58–61 (VGSG), 62–63 (HS), 144–148 (ISTGT), I199, and 543–546 (LSGK). Position 62 is a pros-8alpha-FAD histidine (H62).

The protein belongs to the oxygen-dependent FAD-linked oxidoreductase family. FAD serves as cofactor.

It carries out the reaction D-arabinono-1,4-lactone + O2 = dehydro-D-arabinono-1,4-lactone + H2O2 + H(+). The enzyme catalyses L-galactono-1,4-lactone + O2 = L-ascorbate + H2O2 + H(+). It catalyses the reaction L-gulono-1,4-lactone + O2 = L-ascorbate + H2O2 + H(+). The catalysed reaction is L-xylono-1,4-lactone + O2 = dehydro-L-arabinono-1,4-lactone + H2O2 + H(+). It functions in the pathway cofactor biosynthesis; D-erythroascorbate biosynthesis; dehydro-D-arabinono-1,4-lactone from D-arabinose: step 2/2. Its function is as follows. D-arabinono-1,4-lactone oxidase that catalyzes the final step of biosynthesis of D-erythroascorbic acid, an important antioxidant and one of the virulence factors enhancing the pathogenicity. Is also able to oxidize L-galactono-1,4-lactone, L-xylono-1,4-lactone and L-gulono-1,4-lactone. The sequence is that of D-arabinono-1,4-lactone oxidase from Candida albicans (strain SC5314 / ATCC MYA-2876) (Yeast).